The primary structure comprises 641 residues: DEAD-box ATP-dependent RNA helicase 50 (641 aa).

Disordered regions lie at residues 86–115 (SMPS…IGNF), 129–189 (RSAH…LNSV), and 197–216 (DDLD…WGNI). A compositionally biased stretch (acidic residues) spans 150 to 159 (PSDESDEDGT). The Q motif signature appears at 240 to 268 (RSFKEIGCSDEILGALRSFGFPRPSHIQA). The 182-residue stretch at 271-452 (YRPVLEGKSC…VETFPDCELI (182 aa)) folds into the Helicase ATP-binding domain. ATP is bound at residue 284–291 (DQSGSGKT). The DEAD box signature appears at 399-402 (DEVD). A Helicase C-terminal domain is found at 487–641 (NKKSALVKII…GHPLHDVPCV (155 aa)).

This sequence belongs to the DEAD box helicase family.

The enzyme catalyses ATP + H2O = ADP + phosphate + H(+). Probably involved in resistance to biotic and abiotic stresses. Confers tolerance to oxidative stress and mediates pathogenesis-related (PR) genes expression. Exhibits RNA-dependent ATPase and ATP-dependent RNA helicase activities in vitro. The sequence is that of DEAD-box ATP-dependent RNA helicase 50 from Oryza sativa subsp. japonica (Rice).